The primary structure comprises 863 residues: Scm-like with four MBT domains protein 1 (863 aa).

MBT repeat units follow at residues Phe-20 to Pro-120, Ser-128 to Pro-232, Ala-242 to Pro-346, and Phe-354 to Pro-451. Residues Lys-638–Pro-773 are disordered. The segment covering Lys-660–Ser-679 has biased composition (basic residues). A compositionally biased stretch (polar residues) spans Ser-680–Pro-691. Residues Gly-696–Leu-710 show a composition bias toward acidic residues. A phosphoserine mark is found at Ser-764 and Ser-772. The SAM domain occupies Trp-793–Phe-861.

In terms of assembly, interacts with MYOD1. Component of the SLC (SFMBT1-LSD1-CoREST) corepressor complex, which also contains KDM1A/LSD1 and RCOR1/CoREST. Interacts with KDM1A/LSD1 and RCOR1/CoREST. Interacts with MYOD1. Interacts with L3MBTL3. Highly expressed in the testis, low expression was detected in brain, kidney, heart and lung.

Its subcellular location is the nucleus. Histone-binding protein, which is part of various corepressor complexes. Mediates the recruitment of corepressor complexes to target genes, followed by chromatin compaction and repression of transcription. Plays a role during myogenesis: required for the maintenance of undifferentiated states of myogenic progenitor cells via interaction with MYOD1. Interaction with MYOD1 leads to the recruitment of associated corepressors and silencing of MYOD1 target genes. Part of the SLC complex in germ cells, where it may play a role during spermatogenesis. In Rattus norvegicus (Rat), this protein is Scm-like with four MBT domains protein 1 (Sfmbt1).